Reading from the N-terminus, the 257-residue chain is MLRGCGEVGAVDCSPEQLNKHLKMVPGGRKHSGKSGKPPLIDQPKKAFDFEKEDKDLSGSEEDAVDEKTQVFDKHGKKRSAGIIEDVGGEVQNMLEKFGADINKALLAKKKRIEMYTKASFKASNQKIEQIWKTQQEEIQKLNNEYSQQFLSVLQQWELDMQKFEEQGEKLTNLFRQQQKIFQQTRIVQSQRMKAIKQLHEQFIKSLEDVEKNNDNLFTGTQSELKKEMAMLQKKVMMETQQQEMANVRKSLQSMLF.

At Ser-14 the chain carries Phosphoserine. The span at 23 to 34 (KMVPGGRKHSGK) shows a compositional bias: basic residues. The disordered stretch occupies residues 23 to 66 (KMVPGGRKHSGKSGKPPLIDQPKKAFDFEKEDKDLSGSEEDAVD). The span at 43–58 (QPKKAFDFEKEDKDLS) shows a compositional bias: basic and acidic residues. A phosphoserine mark is found at Ser-58 and Ser-60. An interaction with DNA region spans residues 74–79 (KHGKKR). The residue at position 80 (Ser-80) is a Phosphoserine. Positions 87–244 (VGGEVQNMLE…KVMMETQQQE (158 aa)) form a coiled coil. Residues 90–95 (EVQNML) are important for oligomerization and fiber formation. The interval 109–112 (KKKR) is interaction with DNA. The short motif at 109 to 112 (KKKR) is the Nuclear localization signal element. A Phosphothreonine modification is found at Thr-221. Positions 252-257 (LQSMLF) are important for oligomerization and fiber formation.

The protein belongs to the XLR/SYCP3 family. Component of the lateral elements of synaptonemal complexes. Homotetramer; the tetrameric helix bundles assemble end to end into long homopolimeric fibers (in vitro). Homooligomer that assembles into fibers; the fibers exhibit a transversal striation with a periodicity of about 20 nm (in vitro). Interacts with SYCP2. Forms a complex with EWSR1, PRDM9, REC8 and SYCP1; complex formation is dependent of phosphorylated form of REC8 and requires PRDM9 bound to hotspot DNA; EWSR1 joins PRDM9 with the chromosomal axis through REC8. Phosphorylated. As to expression, detected in spermatocytes and testis (at protein level). Testis-specific.

Its subcellular location is the nucleus. The protein resides in the chromosome. The protein localises to the centromere. Its function is as follows. Component of the synaptonemal complexes (SCS), formed between homologous chromosomes during meiotic prophase. Required for centromere pairing during meiosis in male germ cells. Required for normal meiosis during spermatogenesis and male fertility. Plays a lesser role in female fertility. Required for efficient phosphorylation of HORMAD1 and HORMAD2. This is Synaptonemal complex protein 3 (Sycp3) from Rattus norvegicus (Rat).